The following is a 238-amino-acid chain: Formate dehydrogenase, cytochrome b556 subunit (238 aa).

Positions 23 and 62 each coordinate heme b. 4 helical membrane passes run 23 to 43 (HWML…FFFP), 60 to 80 (AIHP…ALLY), 120 to 140 (MLFW…IIMW), and 155 to 175 (IAIL…LVHI). 2 residues coordinate heme b: His160 and His174.

The protein belongs to the formate dehydrogenase gamma subunit family. Formate dehydrogenase is a membrane-bound complex, formed by subunits alpha, beta and gamma. It depends on heme as a cofactor.

It localises to the cell membrane. Functionally, allows to use formate as major electron donor during anaerobic respiration. Subunit gamma is probably the cytochrome b556(FDO) component of the formate dehydrogenase. This Haemophilus influenzae (strain ATCC 51907 / DSM 11121 / KW20 / Rd) protein is Formate dehydrogenase, cytochrome b556 subunit (fdxI).